The following is an 887-amino-acid chain: UPF0182 protein CTC_00086 (887 aa).

Transmembrane regions (helical) follow at residues 9 to 29, 47 to 67, 87 to 107, 146 to 166, 195 to 215, 242 to 262, and 266 to 286; these read FIAIIILLLILFLYRSTSFII, FFTIGKLFTLSFALIFISIWL, LMIAFNCIVSSLFAYFFSSKY, VLILRVLVFLVIYTLILYFII, GKQLAVVSAIILLFLSMGYII, IYRIIIIVSFIGSIVVFISII, and IKPIIISLVLIFLLILSEGAT.

This sequence belongs to the UPF0182 family.

It localises to the cell membrane. The protein is UPF0182 protein CTC_00086 of Clostridium tetani (strain Massachusetts / E88).